The sequence spans 406 residues: S-adenosylmethionine synthase (406 aa).

His17 contacts ATP. Asp19 serves as a coordination point for Mg(2+). Glu45 is a K(+) binding site. Residues Glu58 and Gln101 each contribute to the L-methionine site. The flexible loop stretch occupies residues 101 to 111; it reads QSAEINQGVAR. Residues 178-180, Asp258, 264-265, Ala281, and Lys285 each bind ATP; these read DGK and RK. Residue Asp258 participates in L-methionine binding. An L-methionine-binding site is contributed by Lys289.

Belongs to the AdoMet synthase family. As to quaternary structure, homotetramer; dimer of dimers. It depends on Mg(2+) as a cofactor. K(+) is required as a cofactor.

Its subcellular location is the cytoplasm. It carries out the reaction L-methionine + ATP + H2O = S-adenosyl-L-methionine + phosphate + diphosphate. It functions in the pathway amino-acid biosynthesis; S-adenosyl-L-methionine biosynthesis; S-adenosyl-L-methionine from L-methionine: step 1/1. Functionally, catalyzes the formation of S-adenosylmethionine (AdoMet) from methionine and ATP. The overall synthetic reaction is composed of two sequential steps, AdoMet formation and the subsequent tripolyphosphate hydrolysis which occurs prior to release of AdoMet from the enzyme. This is S-adenosylmethionine synthase from Bifidobacterium longum subsp. infantis (strain ATCC 15697 / DSM 20088 / JCM 1222 / NCTC 11817 / S12).